A 112-amino-acid chain; its full sequence is Large ribosomal subunit protein uL22 (112 aa).

Belongs to the universal ribosomal protein uL22 family. As to quaternary structure, part of the 50S ribosomal subunit.

Functionally, this protein binds specifically to 23S rRNA; its binding is stimulated by other ribosomal proteins, e.g. L4, L17, and L20. It is important during the early stages of 50S assembly. It makes multiple contacts with different domains of the 23S rRNA in the assembled 50S subunit and ribosome. In terms of biological role, the globular domain of the protein is located near the polypeptide exit tunnel on the outside of the subunit, while an extended beta-hairpin is found that lines the wall of the exit tunnel in the center of the 70S ribosome. The protein is Large ribosomal subunit protein uL22 of Caldanaerobacter subterraneus subsp. tengcongensis (strain DSM 15242 / JCM 11007 / NBRC 100824 / MB4) (Thermoanaerobacter tengcongensis).